The chain runs to 227 residues: Hydroxylase/desaturase asaB (227 aa).

It belongs to the asaB hydroxylase/desaturase family.

It participates in secondary metabolite biosynthesis. Its function is as follows. Hydroxylase/desaturase; part of the gene cluster that mediates the biosynthesis of aspergillic acid, a hydroxamic acid-containing pyrazinone with aliphatic side chains that originates from leucine (Leu) and isoleucine (Ile). Aspergillic acid has antibiotic properties and was shown to be lethal to mice. The first step in the pathway is the production of deoxyaspergillic acid via a condensation between the Ile amine and the Leu carboxylic acid, followed by a reductive release from the protein forming the dipeptide aldehyde NH(2)-Leu-Ile-CHO, which could undergo an intermolecular cyclization resulting in a dihydropyrazinone. As the NRPS asaC lacks a condensation domain, it is improbable that it is responsible for condensation of Leu and Ile. One possibility is that asaC acts on a previously condensed dipeptide and functions as a Leu-Ile reductase to yield deoxyaspergillic acid. After asaC forms deoxyaspergillic acid, the cytochrome P450 asaD oxidizes the pyrazinone to the hydroxamic acid-containing bioactive metabolite aspergillic acid. The hydroxylase/desaturase asaB can then convert aspergillic acid to hydroxyaspergillic acid. Both aspergillic acid and hydroxyaspergillic acid can form complexes with iron producing ferriaspergillin analogs. The polypeptide is Hydroxylase/desaturase asaB (Aspergillus flavus (strain ATCC 200026 / FGSC A1120 / IAM 13836 / NRRL 3357 / JCM 12722 / SRRC 167)).